The primary structure comprises 438 residues: Putative cytochrome P450 140 (438 aa).

Heme is bound at residue C381.

This sequence belongs to the cytochrome P450 family. It depends on heme as a cofactor.

This is Putative cytochrome P450 140 (cyp140) from Mycobacterium bovis (strain ATCC BAA-935 / AF2122/97).